A 374-amino-acid chain; its full sequence is Tryptophan--tRNA ligase (374 aa).

The short motif at P81 to H89 is the 'HIGH' region element. Positions K258–S262 match the 'KMSKS' region motif.

This sequence belongs to the class-I aminoacyl-tRNA synthetase family.

Its subcellular location is the cytoplasm. The catalysed reaction is tRNA(Trp) + L-tryptophan + ATP = L-tryptophyl-tRNA(Trp) + AMP + diphosphate + H(+). This Pyrobaculum arsenaticum (strain DSM 13514 / JCM 11321 / PZ6) protein is Tryptophan--tRNA ligase.